Consider the following 210-residue polypeptide: Glutathione S-transferase P 2 (210 aa).

A GST N-terminal domain is found at 1–82 (SGYTLTYFPL…LLARYGLSGS (82 aa)). Glutathione-binding positions include Tyr-7, Arg-13, Trp-38, Lys-46, 53–54 (QI), and 66–67 (QS). The GST C-terminal domain occupies 83–204 (NEREIAINEM…KSEGRKRRPI (122 aa)).

The protein belongs to the GST superfamily. Pi family. As to quaternary structure, homodimer. Liver, kidney, muscle, skin, lung and ovary.

It catalyses the reaction RX + glutathione = an S-substituted glutathione + a halide anion + H(+). Its function is as follows. Conjugation of reduced glutathione to a wide number of exogenous and endogenous hydrophobic electrophiles. The chain is Glutathione S-transferase P 2 from Bufo bufo (European toad).